Here is a 127-residue protein sequence, read N- to C-terminus: Small ribosomal subunit protein uS17m (127 aa).

It belongs to the universal ribosomal protein uS17 family.

Its subcellular location is the mitochondrion. The protein is Small ribosomal subunit protein uS17m (mrps17) of Dictyostelium discoideum (Social amoeba).